The following is a 55-amino-acid chain: UPF0391 membrane protein Meso_3110 (55 aa).

Helical transmembrane passes span 4-24 (WALVFLVVAIIAGALGFGGIA) and 30-50 (IAQILFYIFLILLVVSLLFGL).

The protein belongs to the UPF0391 family.

It is found in the cell membrane. This chain is UPF0391 membrane protein Meso_3110, found in Chelativorans sp. (strain BNC1).